The chain runs to 79 residues: Conotoxin Cal9.2a (79 aa).

Residues Met1–Ala23 form the signal peptide. Residues Gly24 to Leu33 constitute a propeptide that is removed on maturation. Intrachain disulfides connect Cys41–Cys58, Cys46–Cys68, and Cys48–Cys73.

In terms of tissue distribution, expressed by the venom duct.

Its subcellular location is the secreted. In terms of biological role, probable neurotoxin with unknown target. Possibly targets ion channels. This Californiconus californicus (California cone) protein is Conotoxin Cal9.2a.